We begin with the raw amino-acid sequence, 402 residues long: Dihydrolipoyllysine-residue acetyltransferase component of pyruvate dehydrogenase complex (402 aa).

The 69-residue stretch at 1 to 69 (MPDIGLEEVE…KTSSIIMIFK (69 aa)) folds into the Lipoyl-binding domain. Residue lysine 35 is modified to N6-lipoyllysine. The Peripheral subunit-binding (PSBD) domain maps to 109–146 (HATPVVRRLARHLNVDLKNITPSGPKNRILKEDIELYI). Residue histidine 375 is part of the active site.

This sequence belongs to the 2-oxoacid dehydrogenase family. In terms of assembly, forms a 24-polypeptide structural core with octahedral symmetry. (R)-lipoate is required as a cofactor.

The enzyme catalyses N(6)-[(R)-dihydrolipoyl]-L-lysyl-[protein] + acetyl-CoA = N(6)-[(R)-S(8)-acetyldihydrolipoyl]-L-lysyl-[protein] + CoA. Functionally, the pyruvate dehydrogenase complex catalyzes the overall conversion of pyruvate to acetyl-CoA and CO(2). It contains multiple copies of three enzymatic components: pyruvate dehydrogenase (E1), dihydrolipoamide acetyltransferase (E2) and lipoamide dehydrogenase (E3). In Buchnera aphidicola subsp. Schizaphis graminum (strain Sg), this protein is Dihydrolipoyllysine-residue acetyltransferase component of pyruvate dehydrogenase complex (aceF).